The primary structure comprises 254 residues: MTVEERSNTAKVDILGVDFDNTTMLQMVENIKTFFANQSTNNLFIVTANPEIVNYATTHQAYLELINQASYIVADGTGVVKASHRLKQPLAHRIPGIELMDECLKIAHVNHQKVFLLGATNEVVEAAQYALQQRYPNISFAHHHGYIDLEDETVVKRIKLFKPDYIFVGMGFPKQEEWIMTHENQFESTVMMGVGGSLEVFAGAKKRAPYIFRKLNIEWIYRALMDWKRIGRLKSIPIFMYKIAKAKRKIKKAK.

Belongs to the glycosyltransferase 26 family. TagA/TarA subfamily.

The enzyme catalyses UDP-N-acetyl-alpha-D-mannosamine + N-acetyl-alpha-D-glucosaminyl-di-trans,octa-cis-undecaprenyl diphosphate = N-acetyl-beta-D-mannosaminyl-(1-&gt;4)-N-acetyl-alpha-D-glucosaminyl di-trans,octa-cis-undecaprenyl diphosphate + UDP + H(+). It participates in cell wall biogenesis; poly(ribitol phosphate) teichoic acid biosynthesis. In terms of biological role, catalyzes the conversion of GlcNAc-PP-undecaprenol into ManNAc-GlcNAc-PP-undecaprenol, the first committed lipid intermediate in the de novo synthesis of teichoic acid. The protein is N-acetylglucosaminyldiphosphoundecaprenol N-acetyl-beta-D-mannosaminyltransferase (tarA) of Staphylococcus aureus (strain MW2).